The chain runs to 119 residues: Phosphoribosyl-AMP cyclohydrolase (119 aa).

Asp-77 contacts Mg(2+). Cys-78 provides a ligand contact to Zn(2+). 2 residues coordinate Mg(2+): Asp-79 and Asp-81. Zn(2+) is bound by residues Cys-94 and Cys-101.

The protein belongs to the PRA-CH family. Homodimer. Mg(2+) is required as a cofactor. It depends on Zn(2+) as a cofactor.

The protein localises to the cytoplasm. The catalysed reaction is 1-(5-phospho-beta-D-ribosyl)-5'-AMP + H2O = 1-(5-phospho-beta-D-ribosyl)-5-[(5-phospho-beta-D-ribosylamino)methylideneamino]imidazole-4-carboxamide. The protein operates within amino-acid biosynthesis; L-histidine biosynthesis; L-histidine from 5-phospho-alpha-D-ribose 1-diphosphate: step 3/9. In terms of biological role, catalyzes the hydrolysis of the adenine ring of phosphoribosyl-AMP. The polypeptide is Phosphoribosyl-AMP cyclohydrolase (Cereibacter sphaeroides (strain ATCC 17029 / ATH 2.4.9) (Rhodobacter sphaeroides)).